A 414-amino-acid chain; its full sequence is Probable aminotransferase TAT2 (414 aa).

The protein belongs to the class-I pyridoxal-phosphate-dependent aminotransferase family. Requires pyridoxal 5'-phosphate as cofactor.

This Arabidopsis thaliana (Mouse-ear cress) protein is Probable aminotransferase TAT2.